The primary structure comprises 181 residues: Endoribonuclease YbeY (181 aa).

3 residues coordinate Zn(2+): His120, His124, and His130. Residues 157-181 (AGGKRPAGGADGADGAGEPGPTAAR) form a disordered region. Over residues 161–174 (RPAGGADGADGAGE) the composition is skewed to gly residues.

Belongs to the endoribonuclease YbeY family. Requires Zn(2+) as cofactor.

It localises to the cytoplasm. Its function is as follows. Single strand-specific metallo-endoribonuclease involved in late-stage 70S ribosome quality control and in maturation of the 3' terminus of the 16S rRNA. The protein is Endoribonuclease YbeY of Frankia alni (strain DSM 45986 / CECT 9034 / ACN14a).